The chain runs to 486 residues: UDP-N-acetylmuramate--L-alanine ligase (486 aa).

ATP is bound at residue 129-135; that stretch reads GTHGKTT.

Belongs to the MurCDEF family.

Its subcellular location is the cytoplasm. The catalysed reaction is UDP-N-acetyl-alpha-D-muramate + L-alanine + ATP = UDP-N-acetyl-alpha-D-muramoyl-L-alanine + ADP + phosphate + H(+). It participates in cell wall biogenesis; peptidoglycan biosynthesis. In terms of biological role, cell wall formation. The sequence is that of UDP-N-acetylmuramate--L-alanine ligase from Vibrio atlanticus (strain LGP32) (Vibrio splendidus (strain Mel32)).